The sequence spans 499 residues: Serine carboxypeptidase 1 (499 aa).

The signal sequence occupies residues 1–30 (MARCRRRSGCTAGAALLLLLALALSGGGGA). 3 disulfide bridges follow: C92–C388, C256–C268, and C291–C355. N-linked (GlcNAc...) asparagine glycosylation occurs at N148. S188 is a catalytic residue. N-linked (GlcNAc...) asparagine glycosylation occurs at N262. Positions 297–351 (IKEVNLQNSKLPQSFKDLGTTNKPFPVRTRMLGRAWPLRAPVKAGRVPSWQEVAS) are cleaved as a propeptide — linker peptide. N407 carries an N-linked (GlcNAc...) asparagine glycan. Catalysis depends on residues D423 and H476. Residues 497 to 499 (SKL) carry the Microbody targeting signal motif.

Belongs to the peptidase S10 family. As to quaternary structure, carboxypeptidase I is a dimer, where each monomer is composed of two chains linked by disulfide bonds. Post-translationally, the linker peptide is endoproteolytically excised during enzyme maturation.

Its subcellular location is the secreted. It carries out the reaction Release of a C-terminal amino acid with broad specificity.. Functionally, may be involved in the degradation of small peptides (2-5 residues) or in the degradation of storage proteins in the embryo. This is Serine carboxypeptidase 1 (CBP1) from Hordeum vulgare (Barley).